The sequence spans 441 residues: G-protein coupled receptor family C group 5 member C (441 aa).

The signal sequence occupies residues 1–23 (MAIHKALVMCLGLPLFLFPGAWA). At 24 to 50 (QGHVPPGCSQGLNPLYYNLCDRSGAWG) the chain is on the extracellular side. Residues 51–71 (IVLEAVAGAGIVTTFVLTIIL) traverse the membrane as a helical segment. At 72–85 (VASLPFVQDTKKRS) the chain is on the cytoplasmic side. A helical membrane pass occupies residues 86 to 106 (LLGTQVFFLLGTLGLFCLVFA). Residues 107–120 (CVVKPDFSTCASRR) are Extracellular-facing. Residues 121–141 (FLFGVLFAICFSCLAAHVFAL) form a helical membrane-spanning segment. Topologically, residues 142–155 (NFLARKNHGPRGWV) are cytoplasmic. A helical membrane pass occupies residues 156 to 176 (IFTVALLLTLVEVIINTEWLI). Residues 177-208 (ITLVRGSGEGGPQGNSSAGWAVASPCAIANMD) are Extracellular-facing. Asn-191 carries N-linked (GlcNAc...) asparagine glycosylation. Residues 209 to 229 (FVMALIYVMLLLLGAFLGAWP) traverse the membrane as a helical segment. The Cytoplasmic segment spans residues 230 to 241 (ALCGRYKRWRKH). The helical transmembrane segment at 242–262 (GVFVLLTTATSVAIWVVWIVM) threads the bilayer. Residues 263–279 (YTYGNKQHNSPTWDDPT) lie on the Extracellular side of the membrane. The chain crosses the membrane as a helical span at residues 280–300 (LAIALAANAWAFVLFYVIPEV). Topologically, residues 301 to 441 (SQVTKSSPEQ…QVFRNPYVWD (141 aa)) are cytoplasmic. Residues Ser-344, Ser-383, Ser-403, and Ser-406 each carry the phosphoserine modification. Positions 412-441 (DMYSAQSHQAATPPKDGKNSQVFRNPYVWD) are disordered. The residue at position 414 (Tyr-414) is a Phosphotyrosine. Thr-423 carries the phosphothreonine modification.

The protein belongs to the G-protein coupled receptor 3 family. In terms of tissue distribution, expression is highest in the periphery, particularly in the stomach, but also in the kidney, liver, pancreas, and prostate. In brain, levels of expression are generally lower than in the periphery, with the exception of cerebellum, spinal cord, and dorsal root ganglia (DRG).

The protein resides in the cell membrane. It localises to the cytoplasmic vesicle membrane. Its function is as follows. This retinoic acid-inducible G-protein coupled receptor provide evidence for a possible interaction between retinoid and G-protein signaling pathways. This Homo sapiens (Human) protein is G-protein coupled receptor family C group 5 member C (GPRC5C).